Here is a 395-residue protein sequence, read N- to C-terminus: uncharacterized protein (395 aa).

Helical transmembrane passes span 12–34 (LLASSLLLTIGRGATLPFMTIYL), 44–66 (LIGYAMTIALTIGVVFSLGFGIL), 75–94 (YMLLAITAFASGFIAITLVN), 99–121 (VVLFFALINCAYSVFATVLKAWF), 134–156 (FSINYTMLNIGWTIGPPLGTLLV), 160–182 (INLPFWLAAICSAFPMLFIQIWV), 208–230 (LLWFTCSGFLASFVSGAFASCIS), 245–264 (VVAVVLPVNAAMVVTLQYSV), 271–293 (ANIRALMTAGTLCFVIGLVGFIF), 298–320 (LLLWGMSAAVFTVGEIIYAPGEY), 341–360 (LGWLGAAINPLVSGVVLTSL), and 364–381 (SLFVILALVIIAAWVLML).

This sequence belongs to the major facilitator superfamily.

The protein localises to the cell inner membrane. A transporter able to export peptides. When overexpressed, allows cells deleted for multiple peptidases (pepA, pepB, pepD and pepN) to grow in the presence of dipeptides Ala-Gln or Gly-Tyr which otherwise inhibit growth. Cells overexpressing this protein have decreased intracellular levels of Ala-Gln dipeptide, and in a system that produces the Ala-Gln dipeptide overproduction of this protein increases export of the dipeptide. This is an uncharacterized protein from Escherichia coli (strain K12).